The following is a 466-amino-acid chain: Tubulointerstitial nephritis antigen-like (466 aa).

An N-terminal signal peptide occupies residues 1–21; that stretch reads MWGCWLGLLLLLLAGQAALEA. Residues 49–96 enclose the SMB domain; it reads EQDMCCRGRADECALPYLGATCYCDLFCNRTVSDCCPDFWDFCLGIPP. Cystine bridges form between C53/C72, C70/C72, C70/C84, C76/C83, and C84/C91. An N-linked (GlcNAc...) asparagine glycan is attached at N77. N-linked (GlcNAc...) asparagine glycosylation occurs at N160.

The protein belongs to the peptidase C1 family. Glycosylated. Highly expressed in kidney, heart and adrenocortical cells of adrenal glands. Moderately expressed in spleen and liver. Also found in prostate, seminal vesicle, epididymis and testis in male reproductive organs. In adrenal glands is found in the outer cortical regions corresponding to the zona glomerulosa (zG) and the undifferentiated cell zone (zU) (at protein level).

The protein localises to the secreted. May be implicated in the adrenocortical zonation and in mechanisms for repressing the CYP11B1 gene expression in adrenocortical cells. This is a non catalytic peptidase C1 family protein. The polypeptide is Tubulointerstitial nephritis antigen-like (Tinagl1) (Mus musculus (Mouse)).